The sequence spans 653 residues: Thioredoxin domain-containing protein 3 homolog (653 aa).

In terms of domain architecture, Thioredoxin spans 9–114; it reads LQETLNTQEA…QETIQETLKN (106 aa). Cysteine 38 and cysteine 41 form a disulfide bridge. Positions 155-299 are NDK 1; the sequence is KQITVALIKP…FFFPDFKPPT (145 aa). The disordered stretch occupies residues 300 to 323; it reads YRSAKSAASRASGRRSKTPSQKPR. Low complexity predominate over residues 301 to 310; the sequence is RSAKSAASRA. NDK regions lie at residues 324-459 and 459-597; these read LQRT…IFHV and VEQT…QFDW. Residues 603–653 are disordered; sequence QAEEGEVNETSGEQPTDEQSGETEKTEEDGEHEGAQSDQQQAVSEAMEKEE. Residues 617–633 are compositionally biased toward acidic residues; it reads PTDEQSGETEKTEEDGE.

The protein in the C-terminal section; belongs to the NDK family. In terms of tissue distribution, testis-specific.

Its function is as follows. May be required during the final stages of sperm tail maturation. May act by reducing disulfide bonds within the sperm components. The sequence is that of Thioredoxin domain-containing protein 3 homolog (CiIC3) from Ciona intestinalis (Transparent sea squirt).